A 465-amino-acid polypeptide reads, in one-letter code: UDP-N-acetylmuramoylalanine--D-glutamate ligase (465 aa).

124-130 serves as a coordination point for ATP; the sequence is GSDGKTT.

Belongs to the MurCDEF family.

Its subcellular location is the cytoplasm. It carries out the reaction UDP-N-acetyl-alpha-D-muramoyl-L-alanine + D-glutamate + ATP = UDP-N-acetyl-alpha-D-muramoyl-L-alanyl-D-glutamate + ADP + phosphate + H(+). Its pathway is cell wall biogenesis; peptidoglycan biosynthesis. Functionally, cell wall formation. Catalyzes the addition of glutamate to the nucleotide precursor UDP-N-acetylmuramoyl-L-alanine (UMA). This chain is UDP-N-acetylmuramoylalanine--D-glutamate ligase, found in Ruminiclostridium cellulolyticum (strain ATCC 35319 / DSM 5812 / JCM 6584 / H10) (Clostridium cellulolyticum).